Here is a 579-residue protein sequence, read N- to C-terminus: Potassium-transporting ATPase potassium-binding subunit (579 aa).

Transmembrane regions (helical) follow at residues 2–22 (MNLVLQYGLYILILVVLAIPL), 66–86 (SFSVLAFSIISLIVLFLIHIF), 135–155 (GLTVQNFVSAAVGISVLFALI), 177–197 (VLYILIPLSIVVSLALVSQGV), 262–282 (LSNLFEMISLLLIPVALCFTF), 292–312 (GIAIFIAMGIMLVVAMGIIGV), 391–411 (VFGGVGCGLYGMIGFAILAVF), 437–457 (VLVCLATPIAILIGSGIASIL), 490–510 (FAGFAANTPFINISIGLSMLF), and 546–566 (FIGLLIFVVLLIGALSFFPAL).

It belongs to the KdpA family. In terms of assembly, the system is composed of three essential subunits: KdpA, KdpB and KdpC.

It localises to the cell membrane. Functionally, part of the high-affinity ATP-driven potassium transport (or Kdp) system, which catalyzes the hydrolysis of ATP coupled with the electrogenic transport of potassium into the cytoplasm. This subunit binds the extracellular potassium ions and delivers the ions to the membrane domain of KdpB through an intramembrane tunnel. This is Potassium-transporting ATPase potassium-binding subunit from Clostridium botulinum (strain Alaska E43 / Type E3).